Consider the following 316-residue polypeptide: Ribosomal RNA small subunit methyltransferase H (316 aa).

S-adenosyl-L-methionine is bound by residues 35–37, Asp55, Phe84, Asp105, and Gln112; that span reads AGH.

It belongs to the methyltransferase superfamily. RsmH family.

Its subcellular location is the cytoplasm. The enzyme catalyses cytidine(1402) in 16S rRNA + S-adenosyl-L-methionine = N(4)-methylcytidine(1402) in 16S rRNA + S-adenosyl-L-homocysteine + H(+). Its function is as follows. Specifically methylates the N4 position of cytidine in position 1402 (C1402) of 16S rRNA. The sequence is that of Ribosomal RNA small subunit methyltransferase H from Streptococcus pneumoniae (strain Taiwan19F-14).